The chain runs to 296 residues: 4-hydroxybenzoate octaprenyltransferase (296 aa).

Helical transmembrane passes span 28 to 48, 51 to 71, 102 to 122, 143 to 163, 174 to 194, 212 to 232, 233 to 253, and 274 to 294; these read IGTL…SDGI, LAVL…GCVI, LLLT…LNHL, FFPI…PMAF, AWIL…VYAM, FGRY…LLMA, VLGA…IVLL, and FLAN…HTFF.

It belongs to the UbiA prenyltransferase family. Mg(2+) serves as cofactor.

The protein resides in the cell inner membrane. It catalyses the reaction all-trans-octaprenyl diphosphate + 4-hydroxybenzoate = 4-hydroxy-3-(all-trans-octaprenyl)benzoate + diphosphate. It functions in the pathway cofactor biosynthesis; ubiquinone biosynthesis. In terms of biological role, catalyzes the prenylation of para-hydroxybenzoate (PHB) with an all-trans polyprenyl group. Mediates the second step in the final reaction sequence of ubiquinone-8 (UQ-8) biosynthesis, which is the condensation of the polyisoprenoid side chain with PHB, generating the first membrane-bound Q intermediate 3-octaprenyl-4-hydroxybenzoate. The chain is 4-hydroxybenzoate octaprenyltransferase from Neisseria meningitidis serogroup C (strain 053442).